Consider the following 348-residue polypeptide: Dihydroorotase (348 aa).

2 residues coordinate Zn(2+): His17 and His19. Residues 19 to 21 (HLR) and Asn45 contribute to the substrate site. 3 residues coordinate Zn(2+): Lys103, His140, and His178. Lys103 carries the post-translational modification N6-carboxylysine. His140 contacts substrate. Leu223 contributes to the substrate binding site. Residue Asp251 participates in Zn(2+) binding. Residue Asp251 is part of the active site. Substrate is bound by residues His255 and Ala267.

It belongs to the metallo-dependent hydrolases superfamily. DHOase family. Class II DHOase subfamily. Homodimer. Zn(2+) serves as cofactor.

The catalysed reaction is (S)-dihydroorotate + H2O = N-carbamoyl-L-aspartate + H(+). The protein operates within pyrimidine metabolism; UMP biosynthesis via de novo pathway; (S)-dihydroorotate from bicarbonate: step 3/3. Functionally, catalyzes the reversible cyclization of carbamoyl aspartate to dihydroorotate. The chain is Dihydroorotase from Escherichia fergusonii (strain ATCC 35469 / DSM 13698 / CCUG 18766 / IAM 14443 / JCM 21226 / LMG 7866 / NBRC 102419 / NCTC 12128 / CDC 0568-73).